The sequence spans 553 residues: Transcription factor MYB65 (553 aa).

The interval 1 to 44 is disordered; the sequence is MSYTTATADSDDGMHSSIHNESPAPDSISNGCRSRGKRSVLKKG. HTH myb-type domains follow at residues 38–90 and 91–145; these read RSVL…ANHL and RPNL…KRRQ. 2 consecutive DNA-binding regions (H-T-H motif) follow at residues 66-90 and 118-141; these read WNAV…ANHL and WAQM…NTRI.

In terms of tissue distribution, mostly expressed in roots (e.g. root tips), stems, pollen, shoot apices, flowers and floral shoot tips, and, to a lower extent, in leaves and siliques.

The protein localises to the nucleus. In terms of biological role, transcriptional activator of alpha-amylase expression that binds to 5'-CAACTGTC-3' motif in target gene promoter. In vegetative tissues, inhibits growth by reducing cell proliferation. Promotes the expression of aleurone-related genes (e.g. CP1, CP, GASA1, BXL1 and BXL2) in seeds. Together with MYB33 and MYB101, promotes the programmed cell death (PCD) the vacuolation of protein storage vacuoles (PSVs) in the aleurone layers during seed germination. Together with MYB33, facilitates anther and tapetum development. The sequence is that of Transcription factor MYB65 from Arabidopsis thaliana (Mouse-ear cress).